The chain runs to 529 residues: Probable E3 ubiquitin-protein ligase MGRN1 (529 aa).

The segment at 275-314 adopts an RING-type zinc-finger fold; it reads ECVVCLSDLRDTLILPCRHLCLCNACADTLRYQANNCPIC. Disordered regions lie at residues 341–362 and 396–529; these read SPVL…IPPG and EMGD…VEEC. Composition is skewed to polar residues over residues 449 to 463 and 477 to 487; these read AQPQ…SPSE and NSGSESRSLGV. Over residues 501–511 the composition is skewed to low complexity; that stretch reads SSLSQSESDPS. Residues 520 to 529 are compositionally biased toward polar residues; sequence ESWSTAVEEC.

Autoubiquitinated in vitro.

It carries out the reaction S-ubiquitinyl-[E2 ubiquitin-conjugating enzyme]-L-cysteine + [acceptor protein]-L-lysine = [E2 ubiquitin-conjugating enzyme]-L-cysteine + N(6)-ubiquitinyl-[acceptor protein]-L-lysine.. It participates in protein modification; protein ubiquitination. Its function is as follows. E3 ubiquitin-protein ligase. Also acts as a negative regulator of hedgehog signaling. The protein is Probable E3 ubiquitin-protein ligase MGRN1 (mgrn1) of Danio rerio (Zebrafish).